Reading from the N-terminus, the 98-residue chain is NADH-ubiquinone oxidoreductase chain 4L (98 aa).

Helical transmembrane passes span 1 to 21 (MTLVHMNLLLAFAMSLTGLLM), 26 to 46 (LMSALLCLEGMVLSLFILATI), and 59 to 79 (MPIILLVFAACEAAIGLALLV).

The protein belongs to the complex I subunit 4L family. In terms of assembly, core subunit of respiratory chain NADH dehydrogenase (Complex I) which is composed of 45 different subunits.

It localises to the mitochondrion inner membrane. The enzyme catalyses a ubiquinone + NADH + 5 H(+)(in) = a ubiquinol + NAD(+) + 4 H(+)(out). Functionally, core subunit of the mitochondrial membrane respiratory chain NADH dehydrogenase (Complex I) which catalyzes electron transfer from NADH through the respiratory chain, using ubiquinone as an electron acceptor. Part of the enzyme membrane arm which is embedded in the lipid bilayer and involved in proton translocation. The sequence is that of NADH-ubiquinone oxidoreductase chain 4L (MT-ND4L) from Pontoporia blainvillei (Franciscana).